A 346-amino-acid polypeptide reads, in one-letter code: Nicotinate-nucleotide--dimethylbenzimidazole phosphoribosyltransferase (346 aa).

The Proton acceptor role is filled by Glu312.

The protein belongs to the CobT family.

It catalyses the reaction 5,6-dimethylbenzimidazole + nicotinate beta-D-ribonucleotide = alpha-ribazole 5'-phosphate + nicotinate + H(+). Its pathway is nucleoside biosynthesis; alpha-ribazole biosynthesis; alpha-ribazole from 5,6-dimethylbenzimidazole: step 1/2. Functionally, catalyzes the synthesis of alpha-ribazole-5'-phosphate from nicotinate mononucleotide (NAMN) and 5,6-dimethylbenzimidazole (DMB). The sequence is that of Nicotinate-nucleotide--dimethylbenzimidazole phosphoribosyltransferase from Cupriavidus taiwanensis (strain DSM 17343 / BCRC 17206 / CCUG 44338 / CIP 107171 / LMG 19424 / R1) (Ralstonia taiwanensis (strain LMG 19424)).